The primary structure comprises 87 residues: Retinal rod rhodopsin-sensitive cGMP 3',5'-cyclic phosphodiesterase subunit gamma (87 aa).

Met1 carries the post-translational modification N-acetylmethionine. The tract at residues 16-54 is disordered; sequence VVGGPVTPRKGPPKFKQRQTRQFKSKPPKKGVQGFGDDI. The span at 26 to 44 shows a compositional bias: basic residues; sequence GPPKFKQRQTRQFKSKPPK.

The protein belongs to the rod/cone cGMP-PDE gamma subunit family. Oligomer composed of two catalytic chains (alpha and beta), an inhibitory chain (gamma) and the delta chain.

It carries out the reaction 3',5'-cyclic GMP + H2O = GMP + H(+). In terms of biological role, participates in processes of transmission and amplification of the visual signal. cGMP-PDEs are the effector molecules in G-protein-mediated phototransduction in vertebrate rods and cones. This chain is Retinal rod rhodopsin-sensitive cGMP 3',5'-cyclic phosphodiesterase subunit gamma (PDE6G), found in Cavia porcellus (Guinea pig).